The following is a 388-amino-acid chain: MKILLFICGEGLGHTSRCLALGKEFLAAGHEVSFGAYGYSRELVRKTGYSAWEIQPEIRLIGETGIFDIGKSIKETLRNLSPVGFRKLLKLIEVLEPDVVLSDGYYSGILAARSRKVPVYFIGHQFNMEEFFQKKGPLLAVAGKLVRRFYNYIFSSVDGIMVPDYPLPYSVNRRNFTIPRALNPNIFFSGPLIRSRYREVEAKAFRHPNVLSTIGAFGYRAAIFRKVLEAAKLDPDIHYTFIAGPGIVPEQFPEIPENVEFTGFTDNPFPYYRGSDLVITAGGHGTIMESLAFGLPVLSFPDEKHTEQENNATVLEDAGYGKRMSYLTRPEVILACIREVLEDENYRRKTRRLMELAEVLDGPAAVRKLLEEKFGERSAGKENSKEET.

The protein belongs to the glycosyltransferase 28 family.

This is an uncharacterized protein from Methanosarcina acetivorans (strain ATCC 35395 / DSM 2834 / JCM 12185 / C2A).